We begin with the raw amino-acid sequence, 173 residues long: dCTP deaminase, dUMP-forming (173 aa).

DCTP-binding positions include 93–98, Asp-111, 119–121, Gln-138, and Tyr-151; these read RSSTGR and TLE. The Proton donor/acceptor role is filled by Glu-121.

It belongs to the dCTP deaminase family. Homotrimer.

The enzyme catalyses dCTP + 2 H2O = dUMP + NH4(+) + diphosphate. The protein operates within pyrimidine metabolism; dUMP biosynthesis; dUMP from dCTP: step 1/1. Bifunctional enzyme that catalyzes both the deamination of dCTP to dUTP and the hydrolysis of dUTP to dUMP without releasing the toxic dUTP intermediate. The chain is dCTP deaminase, dUMP-forming from Clostridium beijerinckii (strain ATCC 51743 / NCIMB 8052) (Clostridium acetobutylicum).